The following is an 875-amino-acid chain: MNNPLEAVTQAVNSLVTALKLPDESAKANEVLGEMSFPQFSRLLPYRDYNQESGLFMNDTTMGFMLEAIPINGANESIVEALDHMLRTKLPRGIPLCIHLMSSQLVGDRIEYGLREFSWSGEQAERFNAITRAYYMKAAATQFPLPEGMNLPLTLRHYRVFISYCSPSKKKSRADILEMENLVKIIRASLQGASITTQTVDAQAFIDIVGEMINHNPDSLYPKRRQLDPYSDLNYQCVEDSFDLKVRADYLTLGLRENGRNSTARILNFHLARNPEIAFLWNMADNYSNLLNPELSISCPFILTLTLVVEDQVKTHSEANLKYMDLEKKSKTSYAKWFPSVEKEAKEWGELRQRLGSGQSSVVSYFLNITAFCKDNNETALEVEQDILNSFRKNGFELISPRFNHMRNFLTCLPFMAGKGLFKQLKEAGVVQRAESFNVANLMPLVADNPLTPAGLLAPTYRNQLAFIDIFFRGMNNTNYNMAVCGTSGAGKTGLIQPLIRSVLDSGGFAVVFDMGDGYKSLCENMGGVYLDGETLRFNPFANITDIDQSAERVRDQLSVMASPNGNLDEVHEGLLLQAVRASWLAKENRARIDDVVDFLKNASDSEQYAESPTIRSRLDEMIVLLDQYTANGTYGQYFNSDEPSLRDDAKMVVLELGGLEDRPSLLVAVMFSLIIYIENRMYRTPRNLKKLNVIDEGWRLLDFKNHKVGEFIEKGYRTARRHTGAYITITQNIVDFDSDKASSAARAAWGNSSYKIILKQSAKEFAKYNQLYPDQFLPLQRDMIGKFGAAKDQWFSSFLLQVENHSSWHRLFVDPLSRAMYSSDGPDFEFVQQKRKEGLSIHEAVWQLAWKKSGPEMASLEAWLEEHEKYRSVA.

It is found in the cell inner membrane. Functionally, required for the assembly of mature F-pilin subunits into extended F pili. This Escherichia coli (strain K12) protein is Protein TraC (traC).